Here is a 258-residue protein sequence, read N- to C-terminus: MTRIHPNALVDPKARLGEEVEVGPFSVIGPDVEIDEGTWIGPHAVIQGPTRIGRDNRIYQFAALGEAPQHKGYQGEPTELVIGDGNTIREFVTCHRGTAQGRGETRIGDHNWLMAYCHIAHDCRLGNHLLFANSASLAGHVDVGDHATLGGFALVHQFCRIGPYAFCGFGSGINRDVPPFVTVSGQMAVPHGINSVGLRRHGFSRERIRDIKRAYRTIYRQGLRLDDAREALCQQLSHSADVQGMVDFIDNSQRGLLR.

It belongs to the transferase hexapeptide repeat family. LpxA subfamily. As to quaternary structure, homotrimer.

It localises to the cytoplasm. The catalysed reaction is a (3R)-hydroxyacyl-[ACP] + UDP-N-acetyl-alpha-D-glucosamine = a UDP-3-O-[(3R)-3-hydroxyacyl]-N-acetyl-alpha-D-glucosamine + holo-[ACP]. It functions in the pathway glycolipid biosynthesis; lipid IV(A) biosynthesis; lipid IV(A) from (3R)-3-hydroxytetradecanoyl-[acyl-carrier-protein] and UDP-N-acetyl-alpha-D-glucosamine: step 1/6. Its function is as follows. Involved in the biosynthesis of lipid A, a phosphorylated glycolipid that anchors the lipopolysaccharide to the outer membrane of the cell. The chain is Acyl-[acyl-carrier-protein]--UDP-N-acetylglucosamine O-acyltransferase from Halorhodospira halophila (strain DSM 244 / SL1) (Ectothiorhodospira halophila (strain DSM 244 / SL1)).